The primary structure comprises 204 residues: Large ribosomal subunit protein eL15 (204 aa).

Belongs to the eukaryotic ribosomal protein eL15 family. Component of the large ribosomal subunit.

It is found in the cytoplasm. Functionally, component of the large ribosomal subunit. The ribosome is a large ribonucleoprotein complex responsible for the synthesis of proteins in the cell. In Silurus meridionalis (Southern catfish), this protein is Large ribosomal subunit protein eL15 (rpl15).